Reading from the N-terminus, the 462-residue chain is UDP-N-acetylmuramoylalanine--D-glutamate ligase (462 aa).

117 to 123 is an ATP binding site; that stretch reads GTNGKTT.

Belongs to the MurCDEF family.

It is found in the cytoplasm. The catalysed reaction is UDP-N-acetyl-alpha-D-muramoyl-L-alanine + D-glutamate + ATP = UDP-N-acetyl-alpha-D-muramoyl-L-alanyl-D-glutamate + ADP + phosphate + H(+). The protein operates within cell wall biogenesis; peptidoglycan biosynthesis. Its function is as follows. Cell wall formation. Catalyzes the addition of glutamate to the nucleotide precursor UDP-N-acetylmuramoyl-L-alanine (UMA). The protein is UDP-N-acetylmuramoylalanine--D-glutamate ligase of Synechococcus sp. (strain CC9902).